The sequence spans 302 residues: MAFQVKIHQIRAFVEVARQGSIRGASRMLNMSQPALSKSIQELEEGLAAQLFFRRSKGVTLTDAGESFYQHASLILEELRAAQEDIRQRQGQLAGQINIGMGASISRSLMPAVISRFHQQHPQVKVRIMEGQLVSMINELRQGELDFTINTYYQGPYDHEFTFEKLLEKQFAIFCRPGHPAIGARSIKQLLDYSWTMPTPHGSYYKQLSELLDDQAQTPQVGVVCETFSACISLVAKSDFLSKLPEEMGCDPLHGQGLVMLPVSEILPKAAYYLIQRRDSRQTPLTASLITQFRRECGYLQS.

An HTH lysR-type domain is found at V5–T62. The segment at residues I22–Q41 is a DNA-binding region (H-T-H motif).

The protein belongs to the LysR transcriptional regulatory family.

In terms of biological role, could be the regulator of the abg operon. In Escherichia coli (strain K12), this protein is HTH-type transcriptional regulator AbgR (abgR).